The chain runs to 44 residues: U2-agatoxin-Ao1s (44 aa).

The propeptide occupies 1 to 9 (KKVYSFLKL). 3 cysteine pairs are disulfide-bonded: Cys-12–Cys-28, Cys-19–Cys-33, and Cys-27–Cys-43.

Belongs to the neurotoxin 01 (U2-agtx) family. Expressed by the venom gland.

The protein localises to the secreted. Insect active toxin causing rapid but reversible paralysis in crickets. No activity shown in mammals. Does not show effect on mammalian voltage-gated calcium channels. In Agelena orientalis (Funnel-web spider), this protein is U2-agatoxin-Ao1s.